The following is a 350-amino-acid chain: Ribosomal RNA large subunit methyltransferase M (350 aa).

S-adenosyl-L-methionine contacts are provided by residues Ser184, 217 to 220 (APGG), Asp236, Asp256, and Asp272. Catalysis depends on Lys301, which acts as the Proton acceptor.

The protein belongs to the class I-like SAM-binding methyltransferase superfamily. RNA methyltransferase RlmE family. RlmM subfamily. As to quaternary structure, monomer.

It is found in the cytoplasm. The catalysed reaction is cytidine(2498) in 23S rRNA + S-adenosyl-L-methionine = 2'-O-methylcytidine(2498) in 23S rRNA + S-adenosyl-L-homocysteine + H(+). Functionally, catalyzes the 2'-O-methylation at nucleotide C2498 in 23S rRNA. The protein is Ribosomal RNA large subunit methyltransferase M of Marinomonas sp. (strain MWYL1).